The chain runs to 341 residues: KH domain-containing RNA-binding protein QKI (341 aa).

The segment at 11–82 (PNPTPDYLMQ…PDAVGPIVQL (72 aa)) is qua1 domain; involved in homodimerization. The KH domain maps to 87–153 (YVPVKEYPDF…WEHLNEDLHV (67 aa)). The segment at 182–213 (AAEGEDSLKKMQLMELAILNGTYRDANIKSPA) is qua2 domain; involved in RNA binding. Residue Ser-188 is modified to Phosphoserine. Arg-227 is subject to Omega-N-methylarginine. Arg-242 is modified (asymmetric dimethylarginine; by CARM1; alternate). At Arg-242 the chain carries Omega-N-methylarginine; alternate. The residue at position 256 (Arg-256) is an Omega-N-methylarginine. The short motif at 276–279 (PPGP) is the SH3-binding element. The Nuclear localization signal signature appears at 324–330 (RVHPYQR).

Belongs to the quaking family. Homodimer; does not require RNA to homodimerize. Able to heterodimerize with BICC1. In terms of processing, methylated by PRMT1. Post-translationally, tyrosine phosphorylated at its C-terminus, probably by FYN. Phosphorylation leads to decreased mRNA-binding affinity, affecting transport and/or stabilization of MBP mRNA. Ubiquitinated by RNF6 in macrophages, leading to its degradation. In terms of tissue distribution, present in myelinating oligodendrocytes (at protein level).

The protein resides in the nucleus. The protein localises to the cytoplasm. RNA reader protein, which recognizes and binds specific RNAs, thereby regulating RNA metabolic processes, such as pre-mRNA splicing, circular RNA (circRNA) formation, mRNA export, mRNA stability and/or translation. Involved in various cellular processes, such as mRNA storage into stress granules, apoptosis, lipid deposition, interferon response, glial cell fate and development. Binds to the 5'-NACUAAY-N(1,20)-UAAY-3' RNA core sequence. Acts as a mRNA modification reader that specifically recognizes and binds mRNA transcripts modified by internal N(7)-methylguanine (m7G). Promotes the formation of circular RNAs (circRNAs) during the epithelial to mesenchymal transition and in cardiomyocytes: acts by binding to sites flanking circRNA-forming exons. CircRNAs are produced by back-splicing circularization of pre-mRNAs. Plays a central role in myelinization via 3 distinct mechanisms. First, acts by protecting and promoting stability of target mRNAs such as MBP, SIRT2 and CDKN1B, which promotes oligodendrocyte differentiation. Second, participates in mRNA transport by regulating the nuclear export of MBP mRNA. Finally, indirectly regulates mRNA splicing of MAG pre-mRNA during oligodendrocyte differentiation by acting as a negative regulator of MAG exon 12 alternative splicing: acts by binding to HNRNPA1 mRNA splicing factor, preventing its translation. Involved in microglia differentiation and remyelination by regulating microexon alternative splicing of the Rho GTPase pathway. Involved in macrophage differentiation: promotes monocyte differentiation by regulating pre-mRNA splicing in naive peripheral blood monocytes. Acts as an important regulator of muscle development: required for the contractile function of cardiomyocytes by regulating alternative splicing of cardiomyocyte transcripts. Acts as a negative regulator of thermogenesis by decreasing stability, nuclear export and translation of mRNAs encoding PPARGC1A and UCP1. Also required for visceral endoderm function and blood vessel development. May also play a role in smooth muscle development. In addition to its RNA-binding activity, also acts as a nuclear transcription coactivator for SREBF2/SREBP2. The protein is KH domain-containing RNA-binding protein QKI of Rattus norvegicus (Rat).